Reading from the N-terminus, the 277-residue chain is NLP effector protein Pc109095 (277 aa).

The signal sequence occupies residues M1–G19. The Hepta-peptide GHRHDWE motif motif lies at R119 to A125. A glycan (N-linked (GlcNAc...) asparagine) is linked at N199.

Belongs to the Necrosis inducing protein (NPP1) family.

The protein resides in the secreted. Secreted effector that contributes strongly to virulence during infection by P.capsici. The chain is NLP effector protein Pc109095 from Phytophthora capsici.